Reading from the N-terminus, the 457-residue chain is Vasoactive intestinal polypeptide receptor (457 aa).

An N-terminal signal peptide occupies residues 1–19 (MGLVEVVWWWRWRFGGGGG). The Extracellular segment spans residues 20-141 (GLVVEVEVWW…KEQTAFYGTV (122 aa)). 3 disulfides stabilise this stretch: Cys51–Cys73, Cys64–Cys105, and Cys87–Cys122. Residues Asn59, Asn70, Asn100, and Asn104 are each glycosylated (N-linked (GlcNAc...) asparagine). Residues 142–166 (KTGYTIGHTLSLIALTAAMIILCLF) traverse the membrane as a helical segment. Topologically, residues 167 to 173 (RKLHCTR) are cytoplasmic. Residues 174 to 193 (NYIHMHLFMSFIMRAIAVFI) traverse the membrane as a helical segment. Topologically, residues 194 to 215 (KDVTLFESGEPEHCFVSSVGCK) are extracellular. Cys214 and Cys284 are oxidised to a cystine. A helical membrane pass occupies residues 216–239 (AMMVFFQYCVMANFFWLLVEGLYL). Topologically, residues 240–253 (HTLLVISFFSERKY) are cytoplasmic. Residues 254-275 (FWWYILIGWGAPSVFITAWTVV) traverse the membrane as a helical segment. Residues 276–292 (RIYFFNVGCWEEIIESP) lie on the Extracellular side of the membrane. The helical transmembrane segment at 293–316 (IWWIIKTPILVSILVNFILFICII) threads the bilayer. Topologically, residues 317–341 (RILVQKLHSPDVGHNETSQYSRLAK) are cytoplasmic. Residues 342-361 (STLLLIPLFGIHYIMFAFFP) form a helical membrane-spanning segment. The Extracellular portion of the chain corresponds to 362 to 373 (DNFKAQVKLVFE). A helical membrane pass occupies residues 374–393 (LVVGSFQGFVVAVLYCFLNG). Residues 394–457 (EVQAELKRKW…SSFQAEFSLV (64 aa)) lie on the Cytoplasmic side of the membrane.

This sequence belongs to the G-protein coupled receptor 2 family. In terms of tissue distribution, expressed in pituitary, hypothalamus, small intestine and ovarian follicles.

It localises to the cell membrane. In terms of biological role, this is a receptor for VIP. The activity of this receptor is mediated by G proteins which activate adenylyl cyclase. The chain is Vasoactive intestinal polypeptide receptor (VIPR1) from Meleagris gallopavo (Wild turkey).